The primary structure comprises 275 residues: Multivesicular body subunit 12A (275 aa).

The region spanning 5–145 (STPITGLAWI…GLVFWCRKGS (141 aa)) is the MABP domain. Positions 151-156 (PTPKPR) match the SH3-binding motif. The UMA domain maps to 216-267 (IDGIPFTIHPMFENTINNSSVAASDFRDLHIKTLSEIESEYNYGFVVEKTAA).

This sequence belongs to the MVB12 family. Component of the ESCRT-I complex (endosomal sorting complex required for transport I).

Its subcellular location is the cytoplasm. It localises to the endosome. It is found in the late endosome membrane. Functionally, component of the ESCRT-I complex, a regulator of vesicular trafficking process. Required for the sorting of endocytic ubiquitinated cargos into multivesicular bodies. This chain is Multivesicular body subunit 12A (mvb12a), found in Xenopus laevis (African clawed frog).